A 335-amino-acid chain; its full sequence is DNA polymerase beta (335 aa).

Lysine 41 participates in a covalent cross-link: Glycyl lysine isopeptide (Lys-Gly) (interchain with G-Cter in ubiquitin). Lysine 60 lines the K(+) pocket. Lysine 60 serves as a coordination point for Na(+). Residue lysine 61 forms a Glycyl lysine isopeptide (Lys-Gly) (interchain with G-Cter in ubiquitin) linkage. Leucine 62 and valine 65 together coordinate K(+). 2 residues coordinate Na(+): leucine 62 and valine 65. Lysine 72 serves as the catalytic Nucleophile; Schiff-base intermediate with DNA; for 5'-dRP lyase activity. The residue at position 72 (lysine 72) is an N6-acetyllysine. Residue lysine 81 forms a Glycyl lysine isopeptide (Lys-Gly) (interchain with G-Cter in ubiquitin) linkage. Arginine 83 carries the omega-N-methylarginine; by PRMT6 modification. Residues threonine 101, valine 103, and isoleucine 106 each coordinate K(+). 3 residues coordinate Na(+): threonine 101, valine 103, and isoleucine 106. An a 2'-deoxyribonucleoside 5'-triphosphate-binding site is contributed by arginine 149. An Omega-N-methylarginine; by PRMT6 modification is found at arginine 152. Positions 180, 183, 189, and 190 each coordinate a 2'-deoxyribonucleoside 5'-triphosphate. The segment at 183–192 is DNA-binding; sequence RGAESSGDMD. Aspartate 190, aspartate 192, and aspartate 256 together coordinate Mg(2+).

It belongs to the DNA polymerase type-X family. Monomer. Binds single-stranded DNA (ssDNA). Interacts with APEX1, LIG1, LIG3, FEN1, PCNA and XRCC1. Interacts with HUWE1/ARF-BP1, STUB1/CHIP and USP47. Interacts with FAM168A. Requires Mg(2+) as cofactor. Methylation by PRMT6 stimulates the polymerase activity by enhancing DNA binding and processivity. In terms of processing, ubiquitinated at Lys-41, Lys-61 and Lys-81: monoubiquitinated by HUWE1/ARF-BP1. Monoubiquitinated protein is then the target of STUB1/CHIP, which catalyzes polyubiquitination from monoubiquitin, leading to degradation by the proteasome. USP47 mediates the deubiquitination of monoubiquitinated protein, preventing polyubiquitination by STUB1/CHIP and its subsequent degradation.

It is found in the nucleus. Its subcellular location is the cytoplasm. It catalyses the reaction DNA(n) + a 2'-deoxyribonucleoside 5'-triphosphate = DNA(n+1) + diphosphate. It carries out the reaction a 5'-end 2'-deoxyribose-2'-deoxyribonucleotide-DNA = (2E,4S)-4-hydroxypenten-2-al-5-phosphate + a 5'-end 5'-phospho-2'-deoxyribonucleoside-DNA + H(+). The catalysed reaction is 2'-deoxyribonucleotide-(2'-deoxyribose 5'-phosphate)-2'-deoxyribonucleotide-DNA = a 3'-end 2'-deoxyribonucleotide-(2,3-dehydro-2,3-deoxyribose 5'-phosphate)-DNA + a 5'-end 5'-phospho-2'-deoxyribonucleoside-DNA + H(+). Its function is as follows. Repair polymerase that plays a key role in base-excision repair. During this process, the damaged base is excised by specific DNA glycosylases, the DNA backbone is nicked at the abasic site by an apurinic/apyrimidic (AP) endonuclease, and POLB removes 5'-deoxyribose-phosphate from the preincised AP site acting as a 5'-deoxyribose-phosphate lyase (5'-dRP lyase); through its DNA polymerase activity, it adds one nucleotide to the 3' end of the arising single-nucleotide gap. Conducts 'gap-filling' DNA synthesis in a stepwise distributive fashion rather than in a processive fashion as for other DNA polymerases. It is also able to cleave sugar-phosphate bonds 3' to an intact AP site, acting as an AP lyase. The polypeptide is DNA polymerase beta (Polb) (Mus musculus (Mouse)).